Reading from the N-terminus, the 38-residue chain is Bacteriocin curvaticin FS47 (38 aa).

It is found in the secreted. Functionally, bacteriocin active against Listeria monocytogenes, Pediococcus, Enterococcus, Lactobacilli and Bacilli. The protein is Bacteriocin curvaticin FS47 of Latilactobacillus curvatus (Lactobacillus curvatus).